Here is a 550-residue protein sequence, read N- to C-terminus: Hydroxylamine reductase (550 aa).

[2Fe-2S] cluster contacts are provided by Cys-3, Cys-6, Cys-18, and Cys-25. Hybrid [4Fe-2O-2S] cluster-binding residues include His-249, Glu-273, Cys-317, Cys-405, Cys-433, Cys-458, Glu-492, and Lys-494. Cys-405 is modified (cysteine persulfide).

Belongs to the HCP family. Requires [2Fe-2S] cluster as cofactor. Hybrid [4Fe-2O-2S] cluster is required as a cofactor.

Its subcellular location is the cytoplasm. It catalyses the reaction A + NH4(+) + H2O = hydroxylamine + AH2 + H(+). Catalyzes the reduction of hydroxylamine to form NH(3) and H(2)O. This is Hydroxylamine reductase from Escherichia fergusonii (strain ATCC 35469 / DSM 13698 / CCUG 18766 / IAM 14443 / JCM 21226 / LMG 7866 / NBRC 102419 / NCTC 12128 / CDC 0568-73).